A 365-amino-acid polypeptide reads, in one-letter code: MFEVNPVKFKIKDLADRTLLLRGIFDYDAKKERLEEVSAELESSEVWNNPENAQALGKERSALELVVKTIDDMDSGLEDVEGLVELAVEEEDEETFADASSELDALEKRLEELEFRRMFSGPHDISDCYLDIQSGSGGTEAQDWANMVLRMFLRWGEAHDYKPELIEVTDGDVAGIKGATIKFTGEYAFGSLRTETGVHRLVRKSPFDSSGKRHTSFCSVFVYPEIDDSIEIDINPSDLRIDTYRASGAGGQHVNKTESAIRITHVPTNTVVQCQNDRSQHKNRDAAMKQLKAKLYELEMLKQNADKQQAEDAKSDIGWGSQIRSYVLDDARIKDLRTGVESRNTQSVLDGDLDKFIEASLKSGL.

Q252 is modified (N5-methylglutamine).

This sequence belongs to the prokaryotic/mitochondrial release factor family. In terms of processing, methylated by PrmC. Methylation increases the termination efficiency of RF2.

The protein resides in the cytoplasm. Functionally, peptide chain release factor 2 directs the termination of translation in response to the peptide chain termination codons UGA and UAA. The protein is Peptide chain release factor 2 of Shewanella woodyi (strain ATCC 51908 / MS32).